The primary structure comprises 766 residues: MAPGPFSSGLFSPPPAALPFLLLLWAGASRGQPCPGRCICQNVAPTLTMLCAKTGLLFVPPAIDRRVVELRLTDNFIAAVRRRDFANMTSLVHLTLSRNTIGQVAAGAFADLRALRALHLDSNRLAEVRGDQLRGLGNLRHLILGNNQIRKVESAAFDAFLSTVEDLDLSYNNLEALPWEAVGQMVNLNTLTLDHNLIDHIAEGTFVQLHKLVRLDMTSNRLHKLPPDGLFLRSQGGGPKPPTPLTVSFGGNPLHCNCELLWLRRLTREDDLETCATPEHLTDRYFWSIPEEEFLCEPPLITRQAGGRALVVEGQAVSLRCRAVGDPEPVVHWVAPDGRLLGNSSRTRVRGDGTLDVTITTLRDSGTFTCIASNAAGEATAPVEVCVVPLPLMAPPPAAPPPLTEPGSSDIATPGRPGANDSTSERRLVAAELTSSSVLIRWPAQRPVPGIRMYQVQYNSSADDSLVYRMIPSTSQTFLVNDLAAGRAYDLCVLAVYDDGATALPATRVVGCVQFTTAGDPAPCRPLRAHFLGGTMIIAIGGVIVASVLVFIVLLMIRYKVYGDGDSRRIKGTSRTPPRVSHVCSQTNGAGAQQASAPPAPDRYEALREVAVPAAIEAKAMEAEATSTELEVVLGRSLGGSATSLCLLPSEETSGEESRAMTGPRRSRSGALGPPTSAPPTLALVPGGAPARPRPQQRYSFDGDYGALFQSHSYPRRARRTKRHRSTPHLDGAGGGAAGEDGDLGLGSARARLAFTSTEWMLESTV.

Positions Met1–Gly31 are cleaved as a signal peptide. One can recognise an LRRNT domain in the interval Gln32–Arg65. Topologically, residues Gln32–Met536 are extracellular. LRR repeat units follow at residues Arg66–Asn87, Ser90–Asp111, Ala114–Gly135, Asn138–Ala159, Thr163–Gln184, Asn187–Gln208, and Lys211–Leu232. Asn87 carries N-linked (GlcNAc...) asparagine glycosylation. One can recognise an LRRCT domain in the interval Asn252–Pro298. An Ig-like domain is found at Pro299 to Cys386. Cys321 and Cys370 are oxidised to a cystine. N-linked (GlcNAc...) asparagine glycosylation occurs at Asn343. A disordered region spans residues Pro397–Ser424. Residues Ser424–Asp520 enclose the Fibronectin type-III domain. A helical membrane pass occupies residues Ile537 to Ile557. The Cytoplasmic portion of the chain corresponds to Arg558–Val766. Disordered stretches follow at residues Arg568 to Pro601 and Leu645 to Gly742. Residue Ser713 is modified to Phosphoserine. Basic residues predominate over residues Tyr714–Thr727. The PDZ-binding motif lies at Glu763–Val766.

This sequence belongs to the LRFN family. As to quaternary structure, can form heteromeric complexes with LRFN2, LRFN3, LRFN4 and LRFN5. Forms homomeric complexes, but not across cell junctions. Interacts with DLG4. Also interacts with DLG1, DLG2, and DLG3. Interacts with 2 AMPA receptor subunits GRIA1 and GRIA2 and NMDA receptor subunit GRIN1. In terms of processing, glycosylated. Predominantly expressed in the brain, with a weak, but broad expression in the cerebral cortex and diencephalic nuclei. Also detected in other parts of the central nervous system, including the olfactory bulb, pons, cerebellum, and medulla oblongata, as well as in the peripheral nervous system, such as the ganglia of cranial nerves and the dorsal root ganglion during gestation.

Its subcellular location is the membrane. The protein localises to the synapse. It is found in the postsynaptic density membrane. Functionally, promotes neurite outgrowth in hippocampal neurons. Involved in the regulation and maintenance of excitatory synapses. Induces the clustering of excitatory postsynaptic proteins, including DLG4, DLGAP1, GRIA1 and GRIN1. In Mus musculus (Mouse), this protein is Leucine-rich repeat and fibronectin type III domain-containing protein 1 (Lrfn1).